The sequence spans 273 residues: Pyridoxal phosphate homeostasis protein (273 aa).

Ser-6 bears the Phosphoserine mark. Residue Lys-47 is modified to N6-(pyridoxal phosphate)lysine. A Phosphotyrosine modification is found at Tyr-69. Lys-125 bears the N6-succinyllysine mark. Phosphoserine occurs at positions 226 and 244. Residues 251-260 (DYSKKTDKPA) are compositionally biased toward basic and acidic residues. The tract at residues 251 to 273 (DYSKKTDKPAAELQAPEEVAQAH) is disordered.

The protein belongs to the pyridoxal phosphate-binding protein YggS/PROSC family.

Functionally, pyridoxal 5'-phosphate (PLP)-binding protein, which may be involved in intracellular homeostatic regulation of pyridoxal 5'-phosphate (PLP), the active form of vitamin B6. The protein is Pyridoxal phosphate homeostasis protein of Bos taurus (Bovine).